We begin with the raw amino-acid sequence, 190 residues long: MSTKILKAGGTEADSFETSISQALVELETNSDLKAQLRELYITKAKEIELHNKKSIIIYVPMPKLKAFQKIQIRLVRELEKKFSGKHVVFIGDRKILPKPSHKTRVANKQKRPRSRTLTSVYDAILEDLVFPAEIVGKRIRVKLDGSQLIKVHLDKNQQTTIEHKVDTFQSVYKKLTGREVTFEFPEPYL.

Belongs to the eukaryotic ribosomal protein eS7 family.

The chain is Small ribosomal subunit protein eS7 (RpS7) from Manduca sexta (Tobacco hawkmoth).